Consider the following 119-residue polypeptide: Phosphoribosyl-AMP cyclohydrolase (119 aa).

Aspartate 77 provides a ligand contact to Mg(2+). A Zn(2+)-binding site is contributed by cysteine 78. 2 residues coordinate Mg(2+): aspartate 79 and aspartate 81. Residues cysteine 94 and cysteine 101 each contribute to the Zn(2+) site.

This sequence belongs to the PRA-CH family. In terms of assembly, homodimer. Requires Mg(2+) as cofactor. Zn(2+) serves as cofactor.

The protein resides in the cytoplasm. The catalysed reaction is 1-(5-phospho-beta-D-ribosyl)-5'-AMP + H2O = 1-(5-phospho-beta-D-ribosyl)-5-[(5-phospho-beta-D-ribosylamino)methylideneamino]imidazole-4-carboxamide. It functions in the pathway amino-acid biosynthesis; L-histidine biosynthesis; L-histidine from 5-phospho-alpha-D-ribose 1-diphosphate: step 3/9. Catalyzes the hydrolysis of the adenine ring of phosphoribosyl-AMP. This Ruegeria pomeroyi (strain ATCC 700808 / DSM 15171 / DSS-3) (Silicibacter pomeroyi) protein is Phosphoribosyl-AMP cyclohydrolase.